Reading from the N-terminus, the 428-residue chain is Enolase (428 aa).

Position 163 (Gln163) interacts with (2R)-2-phosphoglycerate. Catalysis depends on Glu205, which acts as the Proton donor. Mg(2+)-binding residues include Asp242, Glu284, and Asp311. 4 residues coordinate (2R)-2-phosphoglycerate: Lys336, Arg365, Ser366, and Lys387. Residue Lys336 is the Proton acceptor of the active site.

Belongs to the enolase family. Mg(2+) serves as cofactor.

It is found in the cytoplasm. The protein resides in the secreted. The protein localises to the cell surface. The enzyme catalyses (2R)-2-phosphoglycerate = phosphoenolpyruvate + H2O. It participates in carbohydrate degradation; glycolysis; pyruvate from D-glyceraldehyde 3-phosphate: step 4/5. Catalyzes the reversible conversion of 2-phosphoglycerate (2-PG) into phosphoenolpyruvate (PEP). It is essential for the degradation of carbohydrates via glycolysis. This chain is Enolase, found in Tropheryma whipplei (strain TW08/27) (Whipple's bacillus).